Consider the following 571-residue polypeptide: Sulfite reductase [NADPH] hemoprotein beta-component (571 aa).

4 residues coordinate [4Fe-4S] cluster: cysteine 436, cysteine 442, cysteine 481, and cysteine 485. Cysteine 485 contacts siroheme.

Belongs to the nitrite and sulfite reductase 4Fe-4S domain family. As to quaternary structure, alpha(8)-beta(8). The alpha component is a flavoprotein, the beta component is a hemoprotein. It depends on siroheme as a cofactor. [4Fe-4S] cluster is required as a cofactor.

The enzyme catalyses hydrogen sulfide + 3 NADP(+) + 3 H2O = sulfite + 3 NADPH + 4 H(+). It functions in the pathway sulfur metabolism; hydrogen sulfide biosynthesis; hydrogen sulfide from sulfite (NADPH route): step 1/1. Functionally, component of the sulfite reductase complex that catalyzes the 6-electron reduction of sulfite to sulfide. This is one of several activities required for the biosynthesis of L-cysteine from sulfate. The protein is Sulfite reductase [NADPH] hemoprotein beta-component (cysI) of Bacillus subtilis (strain 168).